Consider the following 408-residue polypeptide: Heparan-sulfate 6-O-sulfotransferase 1 (408 aa).

The Cytoplasmic portion of the chain corresponds to 8 to 14; it reads MVERTSK. The chain crosses the membrane as a helical; Signal-anchor for type II membrane protein span at residues 15-35; sequence FLLIVAASVCFMLILYQYVGP. Residues 36-408 are Lumenal-facing; the sequence is GLSLGAPSGR…DYMSHIIEKW (373 aa). 90-98 provides a ligand contact to 3'-phosphoadenylyl sulfate; that stretch reads HIQKTGGTT. Substrate is bound by residues 120-121, R137, W142, and H147; that span reads KK. The active-site Proton acceptor is the H147. Residues R182 and S190 each contribute to the 3'-phosphoadenylyl sulfate site. Substrate is bound by residues H194 and W201. N-linked (GlcNAc...) asparagine glycosylation occurs at N261. A 3'-phosphoadenylyl sulfate-binding site is contributed by 314 to 316; sequence MQY. N-linked (GlcNAc...) asparagine glycosylation is present at N317. Position 320 to 321 (320 to 321) interacts with 3'-phosphoadenylyl sulfate; sequence RA. N-linked (GlcNAc...) asparagine glycosylation occurs at N328. Positions 348-382 form a coiled coil; sequence AKDLFQQRYQYKRQLERMEQRIKNREERLLHRSNE. Residues 376–396 form a disordered region; it reads LLHRSNEALPKEETEEQGRLP.

This sequence belongs to the sulfotransferase 6 family. Post-translationally, N-glycosylated.

It localises to the membrane. It catalyses the reaction alpha-D-glucosaminyl-[heparan sulfate](n) + 3'-phosphoadenylyl sulfate = 6-sulfo-alpha-D-glucosaminyl-[heparan sulfate](n) + adenosine 3',5'-bisphosphate + H(+). In terms of biological role, 6-O-sulfation enzyme which catalyzes the transfer of sulfate from 3'-phosphoadenosine 5'-phosphosulfate (PAPS) to position 6 of the N-sulfoglucosamine residue (GlcNS) of heparan sulfate. May also play a role in limb development. This Gallus gallus (Chicken) protein is Heparan-sulfate 6-O-sulfotransferase 1.